The following is a 353-amino-acid chain: Abasic site processing protein HMCES (353 aa).

Cys-2 acts as the Nucleophile in catalysis. Cys-2 carries the thiazolidine linkage to a ring-opened DNA abasic site modification. Glu-127 is a catalytic residue. Residues Lys-148 and Lys-151 each participate in a glycyl lysine isopeptide (Lys-Gly) (interchain with G-Cter in SUMO2) cross-link. Ser-160 carries the post-translational modification Phosphoserine. Glycyl lysine isopeptide (Lys-Gly) (interchain with G-Cter in SUMO2) cross-links involve residues Lys-274 and Lys-275. Residues 292–353 are disordered; sequence TKSPKKEVPD…DEPVAKRPNS (62 aa). Ser-294 is subject to Phosphoserine. Basic and acidic residues predominate over residues 295–307; the sequence is PKKEVPDSPKKDA. Lys-305 participates in a covalent cross-link: Glycyl lysine isopeptide (Lys-Gly) (interchain with G-Cter in SUMO2). Ser-321 bears the Phosphoserine mark. The PIP-box motif lies at 332–338; sequence SLLDRWL. Basic and acidic residues predominate over residues 336–353; it reads RWLKQEKEDEPVAKRPNS. Glycyl lysine isopeptide (Lys-Gly) (interchain with G-Cter in SUMO2) cross-links involve residues Lys-339 and Lys-342.

The protein belongs to the SOS response-associated peptidase family. As to quaternary structure, interacts (via PIP-box motif) with PCNA. Post-translationally, ubiquitinated; the covalent HMCES DNA-protein cross-link is ubiquitinated, leading to its degradation by the proteasome.

Its subcellular location is the chromosome. Its activity is regulated as follows. Formation and reversal of DNA-protein cross-link depends on DNA context. Catalyzes formation of the thiazolidine linkage in presence of abasic sites in single-stranded DNA. Mediates the reversal of the thiazolidine cross-link in presence of double stranded DNA. Functionally, sensor of abasic sites in single-stranded DNA (ssDNA) required to preserve genome integrity by promoting error-free repair of abasic sites. Acts as an enzyme that recognizes and binds abasic sites in ssDNA at replication forks and chemically modifies the lesion by forming a covalent cross-link with DNA: forms a stable thiazolidine linkage between a ring-opened abasic site and the alpha-amino and sulfhydryl substituents of its N-terminal catalytic cysteine residue. Promotes error-free repair by protecting abasic sites from translesion synthesis (TLS) polymerases and endonucleases that are error-prone and would generate mutations and double-strand breaks. The HMCES DNA-protein cross-link is then either reversed or degraded. HMCES is able to catalyze the reversal of its thiazolidine cross-link and cycle between a cross-link and a non-cross-linked state depending on DNA context: mediates self-reversal of the thiazolidine cross-link in double stranded DNA, allowing APEX1 to initiate downstream repair of abasic sites. The HMCES DNA-protein cross-link can also be degraded by the SPRTN metalloprotease following unfolding by the BRIP1/FANCJ helicase. Has preference for ssDNA, but can also accommodate double-stranded DNA with 3' or 5' overhang (dsDNA), and dsDNA-ssDNA 3' junction. Plays a protective role during somatic hypermutation of immunoglobulin genes in B-cells: acts via its ability to form covalent cross-links with abasic sites, thereby limiting the accumulation of deletions in somatic hypermutation target regions. Also involved in class switch recombination (CSR) in B-cells independently of the formation of a DNA-protein cross-link: acts by binding and protecting ssDNA overhangs to promote DNA double-strand break repair through the microhomology-mediated alternative-end-joining (Alt-EJ) pathway. Acts as a protease: mediates autocatalytic processing of its N-terminal methionine in order to expose the catalytic cysteine. The polypeptide is Abasic site processing protein HMCES (Rattus norvegicus (Rat)).